A 736-amino-acid polypeptide reads, in one-letter code: Glycogen [starch] synthase, muscle (736 aa).

Ser-8 is subject to Phosphoserine; by AMPK and PKA. Ser-11 carries the post-translational modification Phosphoserine. Residue Lys-39 coordinates UDP. UDP-alpha-D-glucose is bound by residues His-205 and Arg-211. Alpha-D-glucose 6-phosphate contacts are provided by His-291, Glu-292, Gln-294, His-297, and Lys-301. Residue Arg-331 participates in UDP binding. Arg-331 contributes to the UDP-alpha-D-glucose binding site. The residue at position 412 (Ser-412) is a Phosphoserine. Alpha-D-glucose 6-phosphate is bound at residue His-501. The UDP-alpha-D-glucose site is built by Glu-510, Trp-512, and Gly-513. Residue Thr-515 coordinates UDP. Alpha-D-glucose 6-phosphate contacts are provided by Arg-582 and Arg-586. The disordered stretch occupies residues Thr-631–Asn-736. A Phosphoserine; by DYRK2, GSK3-alpha, GSK3-beta and PASK modification is found at Ser-641. 2 positions are modified to phosphoserine; by GSK3-alpha and GSK3-beta: Ser-645 and Ser-649. Ser-652 bears the Phosphoserine mark. Ser-653 is subject to Phosphoserine; by GSK3-alpha and GSK3-beta. Phosphoserine; by CK2 is present on Ser-657. The span at Glu-658 to Ala-681 shows a compositional bias: acidic residues. Residues Ala-682–Arg-695 are compositionally biased toward basic and acidic residues. Ser-698 carries the post-translational modification Phosphoserine. Thr-700 bears the Phosphothreonine mark. At Ser-709 the chain carries Phosphoserine. The span at Pro-714 to Pro-727 shows a compositional bias: low complexity. Thr-720 carries the post-translational modification Phosphothreonine. Phosphoserine occurs at positions 726 and 730.

Belongs to the glycosyltransferase 3 family. Part of the GYS1-GYG1 complex, a heterooctamer composed of a tetramer of GYS1 and 2 dimers of GYG1, where each GYS1 protomer binds to one GYG1 subunit (via GYG1 C-terminus); the GYS1 tetramer may dissociate from GYG1 dimers to continue glycogen polymerization on its own. Phosphorylation at Ser-8 by AMPK inactivates the enzyme activity. Primed phosphorylation at Ser-657 (site 5) by CSNK2A1 and CSNK2A2 is required for inhibitory phosphorylation at Ser-641 (site 3a), Ser-645 (site 3b), Ser-649 (site 3c) and Ser-653 (site 4) by GSK3A an GSK3B. Phosphorylated at Ser-641 by PASK, leading to inactivation; phosphorylation by PASK is inhibited by glycogen. Phosphorylated at Ser-641 by DYRK2, leading to inactivation. Dephosphorylation at Ser-641 and Ser-645 by PP1 activates the enzyme.

It carries out the reaction [(1-&gt;4)-alpha-D-glucosyl](n) + UDP-alpha-D-glucose = [(1-&gt;4)-alpha-D-glucosyl](n+1) + UDP + H(+). It functions in the pathway glycan biosynthesis; glycogen biosynthesis. Allosteric activation by glucose-6-phosphate. Phosphorylation reduces the activity towards UDP-glucose. When in the non-phosphorylated state, glycogen synthase does not require glucose-6-phosphate as an allosteric activator; when phosphorylated it does. In terms of biological role, glycogen synthase participates in the glycogen biosynthetic process along with glycogenin and glycogen branching enzyme. Extends the primer composed of a few glucose units formed by glycogenin by adding new glucose units to it. In this context, glycogen synthase transfers the glycosyl residue from UDP-Glc to the non-reducing end of alpha-1,4-glucan. The polypeptide is Glycogen [starch] synthase, muscle (GYS1) (Bos taurus (Bovine)).